Here is a 72-residue protein sequence, read N- to C-terminus: Candidate secreted effector protein MPL124499 (72 aa).

The signal sequence occupies residues 1–21 (MKLSIFAAIFMAFVSLNQVFG).

It belongs to the CPGH1 family.

Its subcellular location is the secreted. The protein localises to the host cell. The protein resides in the host cytoplasm. It localises to the host nucleus. Functionally, rust effector delivered into infected tissues to modulate host functions and contribute to pathogen virulence. Enhances leaf colonization by the bacteria Pseudomonas syringae and the oomycete Hyaloperonospora arabidopsidis pathogens in an Arabidopsis thaliana infection model. The protein is Candidate secreted effector protein MPL124499 of Melampsora larici-populina (strain 98AG31 / pathotype 3-4-7) (Poplar leaf rust fungus).